A 688-amino-acid polypeptide reads, in one-letter code: Potassium-transporting ATPase ATP-binding subunit (688 aa).

The next 4 helical transmembrane spans lie at 35-55, 62-82, 219-239, and 260-280; these read VMFVVYVGSILTTILWVQALG, AGFILAITIWLWFTVLFANFA, IALTILLVALTIVFLGVIVTL, and VLIALLVCLIPTTIAGLLSAI. D313 serves as the catalytic 4-aspartylphosphate intermediate. Residues D350, E354, 383–390, and K401 each bind ATP; that span reads FSAHTRMS. Mg(2+) is bound by residues D524 and D528. 3 helical membrane-spanning segments follow: residues 594–614, 622–642, and 668–688; these read FAIIPAAFVTTYPQLAALNVM, AILSAVIFNALIIVFLIPLAL, and VIVPFIGIKLIDLAIAAVGLA.

It belongs to the cation transport ATPase (P-type) (TC 3.A.3) family. Type IA subfamily. In terms of assembly, the system is composed of three essential subunits: KdpA, KdpB and KdpC.

It localises to the cell inner membrane. It catalyses the reaction K(+)(out) + ATP + H2O = K(+)(in) + ADP + phosphate + H(+). In terms of biological role, part of the high-affinity ATP-driven potassium transport (or Kdp) system, which catalyzes the hydrolysis of ATP coupled with the electrogenic transport of potassium into the cytoplasm. This subunit is responsible for energy coupling to the transport system and for the release of the potassium ions to the cytoplasm. This chain is Potassium-transporting ATPase ATP-binding subunit, found in Dechloromonas aromatica (strain RCB).